Reading from the N-terminus, the 359-residue chain is 3-dehydroquinate synthase (359 aa).

NAD(+) is bound by residues 106-110, 130-131, Lys-143, and Lys-152; these read GVVGD and TS. Residues Glu-185, His-246, and His-263 each coordinate Zn(2+).

Belongs to the sugar phosphate cyclases superfamily. Dehydroquinate synthase family. Co(2+) serves as cofactor. It depends on Zn(2+) as a cofactor. The cofactor is NAD(+).

Its subcellular location is the cytoplasm. It carries out the reaction 7-phospho-2-dehydro-3-deoxy-D-arabino-heptonate = 3-dehydroquinate + phosphate. The protein operates within metabolic intermediate biosynthesis; chorismate biosynthesis; chorismate from D-erythrose 4-phosphate and phosphoenolpyruvate: step 2/7. In terms of biological role, catalyzes the conversion of 3-deoxy-D-arabino-heptulosonate 7-phosphate (DAHP) to dehydroquinate (DHQ). This chain is 3-dehydroquinate synthase, found in Clostridium kluyveri (strain ATCC 8527 / DSM 555 / NBRC 12016 / NCIMB 10680 / K1).